A 532-amino-acid polypeptide reads, in one-letter code: Flavin-containing monooxygenase 3 (532 aa).

FAD-binding positions include 9–13 (GAGVS), Glu-32, 40–41 (LW), and 61–62 (NS). NADP(+) contacts are provided by residues 60 to 61 (SN) and 195 to 198 (SGCD). The residue at position 401 (Ser-401) is a Phosphoserine. Residues 510–530 (FFFHWLKLFAIPILLIAVFLV) form a helical membrane-spanning segment.

This sequence belongs to the FMO family. The cofactor is FAD.

The protein resides in the microsome membrane. It localises to the endoplasmic reticulum membrane. The catalysed reaction is trimethylamine + NADPH + O2 = trimethylamine N-oxide + NADP(+) + H2O. It catalyses the reaction N,N-dimethylaniline + NADPH + O2 + H(+) = N,N-dimethylaniline N-oxide + NADP(+) + H2O. It carries out the reaction hypotaurine + NADPH + O2 + H(+) = taurine + NADP(+) + H2O. The enzyme catalyses (S)-nicotine + NADPH + O2 = trans-(S)-nicotine N(1')-oxide + NADP(+) + H2O. The catalysed reaction is albendazole + NADPH + O2 + H(+) = albendazole S-oxide + NADP(+) + H2O. Its function is as follows. Essential hepatic enzyme that catalyzes the oxygenation of a wide variety of nitrogen- and sulfur-containing compounds including drugs as well as dietary compounds. Plays an important role in the metabolism of trimethylamine (TMA), via the production of trimethylamine N-oxide (TMAO) metabolite. TMA is generated by the action of gut microbiota using dietary precursors such as choline, choline containing compounds, betaine or L-carnitine. By regulating TMAO concentration, FMO3 directly impacts both platelet responsiveness and rate of thrombus formation. This chain is Flavin-containing monooxygenase 3 (FMO3), found in Pan troglodytes (Chimpanzee).